Consider the following 433-residue polypeptide: D-amino acid dehydrogenase (433 aa).

Residue Val-3–Trp-17 participates in FAD binding.

The protein belongs to the DadA oxidoreductase family. FAD serves as cofactor.

It carries out the reaction a D-alpha-amino acid + A + H2O = a 2-oxocarboxylate + AH2 + NH4(+). It functions in the pathway amino-acid degradation; D-alanine degradation; NH(3) and pyruvate from D-alanine: step 1/1. Functionally, oxidative deamination of D-amino acids. This is D-amino acid dehydrogenase from Erwinia tasmaniensis (strain DSM 17950 / CFBP 7177 / CIP 109463 / NCPPB 4357 / Et1/99).